The sequence spans 157 residues: UPF0262 protein amb3341 (157 aa).

Belongs to the UPF0262 family.

This chain is UPF0262 protein amb3341, found in Paramagnetospirillum magneticum (strain ATCC 700264 / AMB-1) (Magnetospirillum magneticum).